Here is a 177-residue protein sequence, read N- to C-terminus: Co-chaperone protein HscB homolog (177 aa).

Residues 8-80 (DFFALFGLPR…LPRAQYMLEL (73 aa)) form the J domain.

The protein belongs to the HscB family. Interacts with HscA and stimulates its ATPase activity.

Its function is as follows. Co-chaperone involved in the maturation of iron-sulfur cluster-containing proteins. Seems to help targeting proteins to be folded toward HscA. This chain is Co-chaperone protein HscB homolog, found in Aromatoleum aromaticum (strain DSM 19018 / LMG 30748 / EbN1) (Azoarcus sp. (strain EbN1)).